A 246-amino-acid chain; its full sequence is Carboxy-S-adenosyl-L-methionine synthase (246 aa).

S-adenosyl-L-methionine is bound by residues Tyr-39, 64 to 66 (GCS), 89 to 90 (DN), 117 to 118 (DI), Asn-132, and Arg-199.

Belongs to the class I-like SAM-binding methyltransferase superfamily. Cx-SAM synthase family. Homodimer.

It carries out the reaction prephenate + S-adenosyl-L-methionine = carboxy-S-adenosyl-L-methionine + 3-phenylpyruvate + H2O. Its function is as follows. Catalyzes the conversion of S-adenosyl-L-methionine (SAM) to carboxy-S-adenosyl-L-methionine (Cx-SAM). The sequence is that of Carboxy-S-adenosyl-L-methionine synthase from Enterobacter sp. (strain 638).